A 144-amino-acid chain; its full sequence is Catabolic 3-dehydroquinase 1 (144 aa).

Tyr24 functions as the Proton acceptor in the catalytic mechanism. Substrate contacts are provided by Asn75, His81, and Asp88. The active-site Proton donor is His101. Substrate-binding positions include 102–103 (IS) and Arg112.

This sequence belongs to the type-II 3-dehydroquinase family. In terms of assembly, homododecamer. Adopts a ring-like structure, composed of an arrangement of two hexameric rings stacked on top of one another.

It carries out the reaction 3-dehydroquinate = 3-dehydroshikimate + H2O. The protein operates within aromatic compound metabolism; 3,4-dihydroxybenzoate biosynthesis; 3,4-dihydroxybenzoate from 3-dehydroquinate: step 1/2. Functionally, is involved in the catabolism of quinate. Allows the utilization of quinate as carbon source via the beta-ketoadipate pathway. This is Catabolic 3-dehydroquinase 1 from Fusarium vanettenii (strain ATCC MYA-4622 / CBS 123669 / FGSC 9596 / NRRL 45880 / 77-13-4) (Fusarium solani subsp. pisi).